Here is a 147-residue protein sequence, read N- to C-terminus: MTIKLHHLRPAPGSKSNKIRVGRGEGGKRGKTAGRGTKGTKARNTVRVGFEGGQMPLHMRLPKLKGFTNPFRTEYQVVNVGDIARLFPEGGAITVEDLVAKGAVRKNQLVKVLGDGELTVAVQVTVDKFTGSAKEKIAAAGGSATEL.

The segment at 1-42 (MTIKLHHLRPAPGSKSNKIRVGRGEGGKRGKTAGRGTKGTKA) is disordered.

The protein belongs to the universal ribosomal protein uL15 family. As to quaternary structure, part of the 50S ribosomal subunit.

Binds to the 23S rRNA. This is Large ribosomal subunit protein uL15 from Rhodococcus erythropolis (strain PR4 / NBRC 100887).